Reading from the N-terminus, the 123-residue chain is UPF0426 protein At1g28150, chloroplastic (123 aa).

A chloroplast-targeting transit peptide spans 1 to 26 (MGFVLICTCPPSSGVVVSQLHHHQFS). A disordered region spans residues 97 to 123 (SGITEEEVDADGVVSNDEDSPQQIEIE). Over residues 100 to 123 (TEEEVDADGVVSNDEDSPQQIEIE) the composition is skewed to acidic residues.

Belongs to the UPF0426 family.

The protein resides in the plastid. It localises to the chloroplast. It is found in the plastoglobule. The sequence is that of UPF0426 protein At1g28150, chloroplastic from Arabidopsis thaliana (Mouse-ear cress).